Here is a 93-residue protein sequence, read N- to C-terminus: MQRGAVLLGVVALLVLWPQAGAELYDVNDPDVRAMVIDGQKLMHDCAIANDYIDDPWWTLNLGAFEEKRVYHSMLSELVFCLNAFLQRRQQAP.

The N-terminal stretch at 1–22 (MQRGAVLLGVVALLVLWPQAGA) is a signal peptide. The propeptide occupies 23-33 (ELYDVNDPDVR).

The protein belongs to the F superfamily. Post-translationally, contains 4 disulfide bonds. Expressed by the venom duct.

It is found in the secreted. The polypeptide is Conotoxin Mr105 (Conus marmoreus (Marble cone)).